A 425-amino-acid chain; its full sequence is Serine--tRNA ligase (425 aa).

230-232 (TAE) provides a ligand contact to L-serine. 261-263 (RSE) lines the ATP pocket. Glutamate 284 contributes to the L-serine binding site. Residue 348-351 (EISS) coordinates ATP. Serine 384 serves as a coordination point for L-serine.

It belongs to the class-II aminoacyl-tRNA synthetase family. Type-1 seryl-tRNA synthetase subfamily. As to quaternary structure, homodimer. The tRNA molecule binds across the dimer.

It localises to the cytoplasm. The enzyme catalyses tRNA(Ser) + L-serine + ATP = L-seryl-tRNA(Ser) + AMP + diphosphate + H(+). The catalysed reaction is tRNA(Sec) + L-serine + ATP = L-seryl-tRNA(Sec) + AMP + diphosphate + H(+). It functions in the pathway aminoacyl-tRNA biosynthesis; selenocysteinyl-tRNA(Sec) biosynthesis; L-seryl-tRNA(Sec) from L-serine and tRNA(Sec): step 1/1. Functionally, catalyzes the attachment of serine to tRNA(Ser). Is also able to aminoacylate tRNA(Sec) with serine, to form the misacylated tRNA L-seryl-tRNA(Sec), which will be further converted into selenocysteinyl-tRNA(Sec). The sequence is that of Serine--tRNA ligase from Streptococcus thermophilus (strain ATCC BAA-491 / LMD-9).